A 251-amino-acid polypeptide reads, in one-letter code: MELVSIIIAAYNCKDTIYATVESALSQTYKNIEIIICDDSSTDDTWDIINKIKDSRIICIKNNYCKGAAGARNCALKIAKGRYIAFLDSDDYWVTTKISNQIHFMETEKVFFSYSNYYIEKDFVITGVFSSPPEINYGAMLKYCNIACSTVILDRTGVKNISFPYIDKEDYALWLNILSKGIKARNTNLVDTYYRVHAGSVSANKFKELIRQSNVLKSIGIKAHHRIICLFYYAINGLIKHCFSYRDKRNA.

The protein belongs to the glycosyltransferase 2 family. Requires Mn(2+) as cofactor. It depends on Mg(2+) as a cofactor.

The protein localises to the cell inner membrane. The catalysed reaction is N-acetyl-alpha-D-glucosaminyl-di-trans,octa-cis-undecaprenyl diphosphate + UDP-alpha-D-glucose = beta-D-Glc-(1-&gt;3)-alpha-D-GlcNAc-di-trans,octa-cis-undecaprenyl diphosphate + UDP + H(+). Its pathway is bacterial outer membrane biogenesis; lipopolysaccharide biosynthesis. Its function is as follows. Catalyzes the addition of Glc, the second sugar moiety of the O56-antigen repeating unit, to GlcNAc-pyrophosphate-undecaprenol. The sequence is that of UDP-Glc:alpha-D-GlcNAc-diphosphoundecaprenol beta-1,3-glucosyltransferase WfaP (wfaP) from Escherichia coli.